A 137-amino-acid polypeptide reads, in one-letter code: Small ribosomal subunit protein uS12 (137 aa).

The segment at 1–26 (MPTINQLVRKPRQSKIKKSTSPALNK) is disordered. Over residues 9–18 (RKPRQSKIKK) the composition is skewed to basic residues.

The protein belongs to the universal ribosomal protein uS12 family. Part of the 30S ribosomal subunit. Contacts proteins S8 and S17. May interact with IF1 in the 30S initiation complex.

With S4 and S5 plays an important role in translational accuracy. Its function is as follows. Interacts with and stabilizes bases of the 16S rRNA that are involved in tRNA selection in the A site and with the mRNA backbone. Located at the interface of the 30S and 50S subunits, it traverses the body of the 30S subunit contacting proteins on the other side and probably holding the rRNA structure together. The combined cluster of proteins S8, S12 and S17 appears to hold together the shoulder and platform of the 30S subunit. This chain is Small ribosomal subunit protein uS12, found in Listeria innocua serovar 6a (strain ATCC BAA-680 / CLIP 11262).